We begin with the raw amino-acid sequence, 484 residues long: MSVKGDIGVIGLAVMGQNLILNMNDHGFKVVAYNRTTSKVDEFLEGAAKGTNIIGAYSLEDLANKLEKPRKVMLMVRAGEVVDHFIDALLPHLEAGDIIIDGGNSNYPDTNRRVAALREKGIRFIGTGVSGGEEGARHGPSIMPGGNEEAWQFVKPVLQAISAKTEQGEPCCDWVGKDGAGHFVKMVHNGIEYGDMQLICEAYQFLKEGVGLSDDELQATFNEWRNTELDSYLIDITADILGYKDADGSRLVDKVLDTAGQKGTGKWTGINALDFGIPLTLITESVFARCVSAFKDQRVAASKLFHKTIGKVEGDKKVWIEAVRKALLASKIISYAQGFMLIREASEHFNWNINYGNTALLWREGCIIRSRFLGNIRDAYEANPDLIFLGSDSYFKGILENAMSDWRKVVAKSIEVGIPMPCMASAITFLDGYTSARLPANLLQAQRDYFGAHTYERTDKPRGEFFHTNWTGRGGNTASTTYDV.

NADP(+) contacts are provided by residues 11–16, 34–36, 76–78, and N104; these read GLAVMG, NRT, and VRA. Substrate is bound by residues N104 and 130-132; that span reads SGG. The active-site Proton acceptor is the K185. 188 to 189 provides a ligand contact to substrate; sequence HN. E192 functions as the Proton donor in the catalytic mechanism. Substrate-binding residues include Y193, K262, R289, R447, and H453.

This sequence belongs to the 6-phosphogluconate dehydrogenase family. As to quaternary structure, homodimer.

The catalysed reaction is 6-phospho-D-gluconate + NADP(+) = D-ribulose 5-phosphate + CO2 + NADPH. The protein operates within carbohydrate degradation; pentose phosphate pathway; D-ribulose 5-phosphate from D-glucose 6-phosphate (oxidative stage): step 3/3. Functionally, catalyzes the oxidative decarboxylation of 6-phosphogluconate to ribulose 5-phosphate and CO(2), with concomitant reduction of NADP to NADPH. This chain is 6-phosphogluconate dehydrogenase, decarboxylating, found in Aggregatibacter actinomycetemcomitans (Actinobacillus actinomycetemcomitans).